A 523-amino-acid polypeptide reads, in one-letter code: Chitinase Chi52 (523 aa).

The N-terminal stretch at 1–30 (MNQAVRFRPVITFALAFLLLITWFAPRADA) is a signal peptide. The segment at 80 to 101 (GSGGETPTPDTAPPSVPAGLTS) is disordered. Positions 95 to 180 (VPAGLTSSSI…TSLSVTTSNG (86 aa)) constitute a Fibronectin type-III domain. The region spanning 190–513 (KWLIGYWHNF…SAHRPFLNGL (324 aa)) is the GH18 domain. Catalysis depends on Glu-302, which acts as the Proton donor.

Belongs to the glycosyl hydrolase 18 family. Chitinase class II subfamily.

The catalysed reaction is Random endo-hydrolysis of N-acetyl-beta-D-glucosaminide (1-&gt;4)-beta-linkages in chitin and chitodextrins.. With respect to regulation, activity is inhibited by Cu(2+) and Co(2+), and almost completely inhibited by SDS. In terms of biological role, acidic chitinase that displays a broad substrate specificity, showing the highest specific activity toward colloidal chitin, followed by ethylene glycol chitin and ball milled chitin, but exhibits no activity toward powdery chitin and chitosan. Hydrolyzes colloidal chitin and chitooligosaccharides with degree of polymerization 2-5 to release mainly N-acetyl chitobiose. Displays inhibition effects on the growth of some phytopathogenic fungi, including Alternaria alstroemeriae, Botrytis cinerea, Rhizoctonia solani, Sclerotinia sclerotiorum and Valsa mali. The polypeptide is Chitinase Chi52 (Paenibacillus xylanexedens).